Here is a 290-residue protein sequence, read N- to C-terminus: 33 kDa chaperonin (290 aa).

2 disulfides stabilise this stretch: C236/C238 and C269/C272.

It belongs to the HSP33 family. Under oxidizing conditions two disulfide bonds are formed involving the reactive cysteines. Under reducing conditions zinc is bound to the reactive cysteines and the protein is inactive.

Its subcellular location is the cytoplasm. In terms of biological role, redox regulated molecular chaperone. Protects both thermally unfolding and oxidatively damaged proteins from irreversible aggregation. Plays an important role in the bacterial defense system toward oxidative stress. The sequence is that of 33 kDa chaperonin from Brevibacillus brevis (strain 47 / JCM 6285 / NBRC 100599).